A 95-amino-acid polypeptide reads, in one-letter code: Small ribosomal subunit protein uS17 (95 aa).

Belongs to the universal ribosomal protein uS17 family. As to quaternary structure, part of the 30S ribosomal subunit.

One of the primary rRNA binding proteins, it binds specifically to the 5'-end of 16S ribosomal RNA. The polypeptide is Small ribosomal subunit protein uS17 (Synechococcus sp. (strain CC9902)).